The following is a 209-amino-acid chain: Large ribosomal subunit protein uL3 (209 aa).

Residues 127–153 (NASRGPMSHGSKFHRAPGSMGAASDPS) form a disordered region.

It belongs to the universal ribosomal protein uL3 family. In terms of assembly, part of the 50S ribosomal subunit. Forms a cluster with proteins L14 and L19.

Its function is as follows. One of the primary rRNA binding proteins, it binds directly near the 3'-end of the 23S rRNA, where it nucleates assembly of the 50S subunit. In Clostridium perfringens (strain SM101 / Type A), this protein is Large ribosomal subunit protein uL3.